Consider the following 489-residue polypeptide: CBL-interacting serine/threonine-protein kinase 12 (489 aa).

The Protein kinase domain occupies 26 to 280 (YEMGKLLGHG…FPEIMENSWF (255 aa)). ATP is bound by residues 32–40 (LGHGTFAKV) and K55. The Proton acceptor role is filled by D148. The activation loop stretch occupies residues 166-195 (DFGLSAVSDQIRQDGLFHTFCGTPAYVAPE). The residue at position 170 (S170) is a Phosphoserine. T184 is modified (phosphothreonine). The region spanning 336–360 (PRPASLNAFDIISFSQGFDLSGLFD) is the NAF domain. A PPI region spans residues 363–392 (GEGSRFVSGAPVSKIISKLEEIAKVVSFTV).

It belongs to the protein kinase superfamily. CAMK Ser/Thr protein kinase family. SNF1 subfamily. Interacts with CBL2 and CBL3. Mn(2+) serves as cofactor. In terms of tissue distribution, expressed in roots and shoots.

It carries out the reaction L-seryl-[protein] + ATP = O-phospho-L-seryl-[protein] + ADP + H(+). The enzyme catalyses L-threonyl-[protein] + ATP = O-phospho-L-threonyl-[protein] + ADP + H(+). Its function is as follows. CIPK serine-threonine protein kinases interact with CBL proteins. Binding of a CBL protein to the regulatory NAF domain of CIPK protein lead to the activation of the kinase in a calcium-dependent manner. The chain is CBL-interacting serine/threonine-protein kinase 12 (CIPK12) from Arabidopsis thaliana (Mouse-ear cress).